We begin with the raw amino-acid sequence, 760 residues long: Serine/threonine-protein kinase Haspin homolog ALK1 (760 aa).

Phosphoserine is present on residues Ser-76 and Ser-79. 4 disordered regions span residues 76–100 (SDAS…KKRW), 123–153 (SSFT…SSLD), 187–264 (DDIS…STVS), and 362–408 (KRNS…CSYS). Residues 78–95 (ASLNVTTGNNTSRKTTSN) are compositionally biased toward polar residues. The KEN box motif lies at 200–202 (KEN). Residues 209–220 (KKNSSIASTSSE) are compositionally biased toward polar residues. Residues 224-232 (RTPLKPLVN) carry the D box motif. Over residues 237 to 250 (PTSQPQQQQPLYNA) the composition is skewed to polar residues. The segment covering 251–264 (SLSSRRSSISSTVS) has biased composition (low complexity). Basic residues predominate over residues 362–386 (KRNSQSSLKHKSSHASLQKFKRNKG). Residues 398-408 (NSSNDDSCSYS) show a composition bias toward low complexity. Positions 468–760 (NCDIKRILNP…NTGDLLKLYK (293 aa)) constitute a Protein kinase domain. ATP-binding positions include 474-482 (ILNPAKGDV) and Lys-510.

The protein belongs to the protein kinase superfamily. Ser/Thr protein kinase family. Haspin subfamily. Periodically phosphorylated during the cell cycle with a phosphorylation peak during mitosis and hyperphosphorylated after DNA damage.

It carries out the reaction L-seryl-[protein] + ATP = O-phospho-L-seryl-[protein] + ADP + H(+). The enzyme catalyses L-threonyl-[protein] + ATP = O-phospho-L-threonyl-[protein] + ADP + H(+). In terms of biological role, serine/threonine haspin-like protein kinase involved in cell cycle regulation. This chain is Serine/threonine-protein kinase Haspin homolog ALK1 (ALK1), found in Saccharomyces cerevisiae (strain ATCC 204508 / S288c) (Baker's yeast).